Reading from the N-terminus, the 677-residue chain is DNA ligase (677 aa).

NAD(+) is bound by residues 43-47 (DHVYD), 92-93 (SM), and E122. The active-site N6-AMP-lysine intermediate is K124. NAD(+)-binding residues include R145, E179, K295, and K319. Zn(2+)-binding residues include C413, C416, C431, and C436. In terms of domain architecture, BRCT spans 599–677 (TSDSYFNGKT…EADLDNYLAQ (79 aa)).

It belongs to the NAD-dependent DNA ligase family. LigA subfamily. Requires Mg(2+) as cofactor. It depends on Mn(2+) as a cofactor.

It carries out the reaction NAD(+) + (deoxyribonucleotide)n-3'-hydroxyl + 5'-phospho-(deoxyribonucleotide)m = (deoxyribonucleotide)n+m + AMP + beta-nicotinamide D-nucleotide.. DNA ligase that catalyzes the formation of phosphodiester linkages between 5'-phosphoryl and 3'-hydroxyl groups in double-stranded DNA using NAD as a coenzyme and as the energy source for the reaction. It is essential for DNA replication and repair of damaged DNA. This Latilactobacillus sakei subsp. sakei (strain 23K) (Lactobacillus sakei subsp. sakei) protein is DNA ligase.